Consider the following 359-residue polypeptide: Elongation factor Ts 1, mitochondrial (359 aa).

The segment covering 323–341 has biased composition (low complexity); sequence GKAAPAPKAEEPAAVAPAK. The interval 323 to 345 is disordered; the sequence is GKAAPAPKAEEPAAVAPAKADAE.

It belongs to the EF-Ts family.

Its subcellular location is the mitochondrion. Its function is as follows. Associates with the EF-Tu.GDP complex and induces the exchange of GDP to GTP. It remains bound to the aminoacyl-tRNA.EF-Tu.GTP complex up to the GTP hydrolysis stage on the ribosome. This Thalassiosira pseudonana (Marine diatom) protein is Elongation factor Ts 1, mitochondrial.